Reading from the N-terminus, the 130-residue chain is Large ribosomal subunit protein bL17 (130 aa).

The protein belongs to the bacterial ribosomal protein bL17 family. Part of the 50S ribosomal subunit. Contacts protein L32.

This Shewanella pealeana (strain ATCC 700345 / ANG-SQ1) protein is Large ribosomal subunit protein bL17.